Here is a 100-residue protein sequence, read N- to C-terminus: Small ribosomal subunit protein uS14c (100 aa).

It belongs to the universal ribosomal protein uS14 family. In terms of assembly, part of the 30S ribosomal subunit.

It localises to the plastid. Functionally, binds 16S rRNA, required for the assembly of 30S particles. The protein is Small ribosomal subunit protein uS14c (rps14) of Cuscuta gronovii (Common dodder).